The following is a 270-amino-acid chain: Dermonecrotic toxin LhSicTox-alphaIA2aiii (270 aa).

Residue His-2 is part of the active site. Residues Glu-22 and Asp-24 each coordinate Mg(2+). Catalysis depends on His-38, which acts as the Nucleophile. Disulfide bonds link Cys-42–Cys-48 and Cys-44–Cys-187. Position 82 (Asp-82) interacts with Mg(2+).

The protein belongs to the arthropod phospholipase D family. Class II subfamily. Mg(2+) is required as a cofactor. Expressed by the venom gland.

The protein resides in the secreted. It carries out the reaction an N-(acyl)-sphingosylphosphocholine = an N-(acyl)-sphingosyl-1,3-cyclic phosphate + choline. The catalysed reaction is an N-(acyl)-sphingosylphosphoethanolamine = an N-(acyl)-sphingosyl-1,3-cyclic phosphate + ethanolamine. The enzyme catalyses a 1-acyl-sn-glycero-3-phosphocholine = a 1-acyl-sn-glycero-2,3-cyclic phosphate + choline. It catalyses the reaction a 1-acyl-sn-glycero-3-phosphoethanolamine = a 1-acyl-sn-glycero-2,3-cyclic phosphate + ethanolamine. Its function is as follows. Dermonecrotic toxins cleave the phosphodiester linkage between the phosphate and headgroup of certain phospholipids (sphingolipid and lysolipid substrates), forming an alcohol (often choline) and a cyclic phosphate. This toxin acts on sphingomyelin (SM). It may also act on ceramide phosphoethanolamine (CPE), lysophosphatidylcholine (LPC) and lysophosphatidylethanolamine (LPE), but not on lysophosphatidylserine (LPS), and lysophosphatidylglycerol (LPG). It acts by transphosphatidylation, releasing exclusively cyclic phosphate products as second products. Induces dermonecrosis, hemolysis, increased vascular permeability, edema, inflammatory response, and platelet aggregation. This Loxosceles hirsuta (Recluse spider) protein is Dermonecrotic toxin LhSicTox-alphaIA2aiii.